The following is a 494-amino-acid chain: Psoralen synthase (494 aa).

Residues 12 to 29 (YFFSLFLVTIFLYKWLTL) form a helical membrane-spanning segment. Cys436 contacts heme.

This sequence belongs to the cytochrome P450 family.

The protein localises to the endoplasmic reticulum membrane. It localises to the microsome membrane. The catalysed reaction is (7S)-marmesin + reduced [NADPH--hemoprotein reductase] + O2 = psoralen + acetone + oxidized [NADPH--hemoprotein reductase] + 2 H2O + H(+). Its activity is regulated as follows. Inhibited by columbianetin. Its function is as follows. Involved in linear furanocumarin (psoralen) biosynthesis. Converts marmesin to psoralen. The sequence is that of Psoralen synthase (CYP71AJ1) from Ammi majus (Bishop's weed).